Consider the following 97-residue polypeptide: Secreted LysM effector Mg1LysM (97 aa).

The signal sequence occupies residues 1-18; it reads MQFTALVAALLSVAAVQA. The LysM domain maps to 37 to 84; sequence QQYVARSGDTLTKIAQEIYHDVVGVCDIARANNLADPNRIDAGTPYTI. Chitin contacts are provided by G44, T48, N74, and I76.

This sequence belongs to the secreted LysM effector family. Forms homodimers in a chitin-independent manner through interactions at the N-termini of Mg1LysM monomers. Homodimers are further polymerized in a chitin-dependent manner.

The protein resides in the secreted. It localises to the cell wall. In terms of biological role, secreted effector that enables the plant pathogenic fungus to manipulate host defenses for successful infection. Binds chitin but not cellulose or xylan. Chitin-induced polymerization of homodimers forms a contiguous Mg1LysM highly oligomeric super-complexe that is anchored to the chitin in the fungal cell wall to prevent hydrolysis by host chitinases. This is Secreted LysM effector Mg1LysM from Zymoseptoria tritici (strain ST99CH_3D7).